The following is a 329-amino-acid chain: Gibberellin 2-beta-dioxygenase 1 (329 aa).

Residues Asn-165 to Pro-273 form the Fe2OG dioxygenase domain. Residues His-197, Asp-199, and His-254 each coordinate Fe cation. Arg-264 is an active-site residue. Arg-264 lines the 2-oxoglutarate pocket.

It belongs to the iron/ascorbate-dependent oxidoreductase family. GA2OX subfamily. It depends on Fe(2+) as a cofactor. Preferentially expressed in flowers, siliques, and upper stems. Not expressed in the apex.

The catalysed reaction is gibberellin A1 + 2-oxoglutarate + O2 = gibberellin A8 + succinate + CO2. The protein operates within plant hormone biosynthesis; gibberellin biosynthesis. Functionally, catalyzes the 2-beta-hydroxylation of several biologically active gibberellins, leading to the homeostatic regulation of their endogenous level. Catabolism of gibberellins (GAs) plays a central role in plant development. Converts GA9/GA20 to GA51/GA29 and GA4/GA1 to GA34/GA8. The protein is Gibberellin 2-beta-dioxygenase 1 (GA2OX1) of Arabidopsis thaliana (Mouse-ear cress).